We begin with the raw amino-acid sequence, 447 residues long: Tubulin beta-2 chain (447 aa).

Residues glutamine 11, glutamate 69, serine 138, glycine 142, threonine 143, glycine 144, asparagine 204, and asparagine 226 each contribute to the GTP site. Glutamate 69 serves as a coordination point for Mg(2+). Polar residues predominate over residues 419 to 428; that stretch reads VSEYQQYQDA. Residues 419–447 form a disordered region; it reads VSEYQQYQDATSDEEGEYEDEDQEPEEDM. A compositionally biased stretch (acidic residues) spans 429-447; it reads TSDEEGEYEDEDQEPEEDM.

Belongs to the tubulin family. Dimer of alpha and beta chains. A typical microtubule is a hollow water-filled tube with an outer diameter of 25 nm and an inner diameter of 15 nM. Alpha-beta heterodimers associate head-to-tail to form protofilaments running lengthwise along the microtubule wall with the beta-tubulin subunit facing the microtubule plus end conferring a structural polarity. Microtubules usually have 13 protofilaments but different protofilament numbers can be found in some organisms and specialized cells. It depends on Mg(2+) as a cofactor.

It localises to the cytoplasm. Its subcellular location is the cytoskeleton. In terms of biological role, tubulin is the major constituent of microtubules, a cylinder consisting of laterally associated linear protofilaments composed of alpha- and beta-tubulin heterodimers. Microtubules grow by the addition of GTP-tubulin dimers to the microtubule end, where a stabilizing cap forms. Below the cap, tubulin dimers are in GDP-bound state, owing to GTPase activity of alpha-tubulin. This chain is Tubulin beta-2 chain (TUBB2), found in Triticum aestivum (Wheat).